A 621-amino-acid polypeptide reads, in one-letter code: Phosphoenolpyruvate carboxykinase [GTP] (621 aa).

Residues Arg83 and 217-219 (YGG) contribute to the substrate site. Positions 226 and 245 each coordinate Mn(2+). Ser267 is a binding site for substrate. 268–273 (MCGKTS) is a binding site for GTP. The active site involves Cys269. A Mn(2+)-binding site is contributed by Asp286. 381 to 383 (NAR) provides a ligand contact to substrate. Arg383 and Arg415 together coordinate GTP.

This sequence belongs to the phosphoenolpyruvate carboxykinase [GTP] family. Mn(2+) serves as cofactor.

Its subcellular location is the cytoplasm. The enzyme catalyses oxaloacetate + GTP = phosphoenolpyruvate + GDP + CO2. It functions in the pathway carbohydrate biosynthesis; gluconeogenesis. Catalyzes the conversion of oxaloacetate (OAA) to phosphoenolpyruvate (PEP), the rate-limiting step in the metabolic pathway that produces glucose from lactate and other precursors derived from the citric acid cycle. The chain is Phosphoenolpyruvate carboxykinase [GTP] from Pyrococcus horikoshii (strain ATCC 700860 / DSM 12428 / JCM 9974 / NBRC 100139 / OT-3).